A 333-amino-acid chain; its full sequence is Holliday junction branch migration complex subunit RuvB (333 aa).

Residues Met-1–Tyr-182 are large ATPase domain (RuvB-L). ATP is bound by residues Leu-21, Arg-22, Gly-63, Lys-66, Thr-67, Thr-68, Glu-129–Phe-131, Arg-172, Tyr-182, and Arg-219. Thr-67 contacts Mg(2+). The segment at Thr-183–Gln-253 is small ATPAse domain (RuvB-S). The tract at residues Lys-256–Val-333 is head domain (RuvB-H). Residues Arg-311 and Arg-316 each contribute to the DNA site.

Belongs to the RuvB family. In terms of assembly, homohexamer. Forms an RuvA(8)-RuvB(12)-Holliday junction (HJ) complex. HJ DNA is sandwiched between 2 RuvA tetramers; dsDNA enters through RuvA and exits via RuvB. An RuvB hexamer assembles on each DNA strand where it exits the tetramer. Each RuvB hexamer is contacted by two RuvA subunits (via domain III) on 2 adjacent RuvB subunits; this complex drives branch migration. In the full resolvosome a probable DNA-RuvA(4)-RuvB(12)-RuvC(2) complex forms which resolves the HJ.

Its subcellular location is the cytoplasm. It catalyses the reaction ATP + H2O = ADP + phosphate + H(+). The RuvA-RuvB-RuvC complex processes Holliday junction (HJ) DNA during genetic recombination and DNA repair, while the RuvA-RuvB complex plays an important role in the rescue of blocked DNA replication forks via replication fork reversal (RFR). RuvA specifically binds to HJ cruciform DNA, conferring on it an open structure. The RuvB hexamer acts as an ATP-dependent pump, pulling dsDNA into and through the RuvAB complex. RuvB forms 2 homohexamers on either side of HJ DNA bound by 1 or 2 RuvA tetramers; 4 subunits per hexamer contact DNA at a time. Coordinated motions by a converter formed by DNA-disengaged RuvB subunits stimulates ATP hydrolysis and nucleotide exchange. Immobilization of the converter enables RuvB to convert the ATP-contained energy into a lever motion, pulling 2 nucleotides of DNA out of the RuvA tetramer per ATP hydrolyzed, thus driving DNA branch migration. The RuvB motors rotate together with the DNA substrate, which together with the progressing nucleotide cycle form the mechanistic basis for DNA recombination by continuous HJ branch migration. Branch migration allows RuvC to scan DNA until it finds its consensus sequence, where it cleaves and resolves cruciform DNA. This Bacillus anthracis (strain A0248) protein is Holliday junction branch migration complex subunit RuvB.